Consider the following 406-residue polypeptide: Peptide transporter imqD (406 aa).

Positions 1 to 25 (MTAPADSTEKSETSETTTLQTTEVS) are disordered. Residues 14 to 25 (SETTTLQTTEVS) show a composition bias toward low complexity. 6 helical membrane passes run 184–204 (GLVA…LSQA), 220–240 (IPND…GPVI), 262–282 (ATGF…QKII), 309–329 (VFLQ…SFVT), 344–364 (AVVQ…GIAI), and 373–393 (LIWM…VFWI).

The protein belongs to the major facilitator superfamily. Proton-dependent oligopeptide transporter (POT/PTR) (TC 2.A.17) family.

The protein localises to the membrane. Its function is as follows. Peptide transporter; part of the gene cluster that mediates the biosynthesis of imizoquins A to D, tripeptide-derived alkaloids that serve a protective role against oxidative stress that are essential for normal germination. The polypeptide is Peptide transporter imqD (Aspergillus flavus (strain ATCC 200026 / FGSC A1120 / IAM 13836 / NRRL 3357 / JCM 12722 / SRRC 167)).